Reading from the N-terminus, the 379-residue chain is Galactose-1-phosphate uridylyltransferase (379 aa).

The segment at 1-21 (MSRSGTDPQQRQQASEADAAA) is disordered. The segment covering 9–21 (QQRQQASEADAAA) has biased composition (low complexity). Cys75 provides a ligand contact to Zn(2+). UDP-alpha-D-glucose is bound by residues Ala81, 97–98 (ND), and Asn173. His184 is a binding site for Zn(2+). The active-site Tele-UMP-histidine intermediate is His186. Gln188 serves as a coordination point for UDP-alpha-D-glucose. Residues Glu202, His301, His319, and His321 each contribute to the Zn(2+) site. Residues 334–337 (KFMV) and 339–340 (YE) contribute to the UDP-alpha-D-glucose site.

This sequence belongs to the galactose-1-phosphate uridylyltransferase type 1 family. In terms of assembly, homodimer. Zn(2+) serves as cofactor.

The catalysed reaction is alpha-D-galactose 1-phosphate + UDP-alpha-D-glucose = alpha-D-glucose 1-phosphate + UDP-alpha-D-galactose. It participates in carbohydrate metabolism; galactose metabolism. Plays an important role in galactose metabolism. The chain is Galactose-1-phosphate uridylyltransferase (GALT) from Homo sapiens (Human).